A 231-amino-acid polypeptide reads, in one-letter code: RNA pyrophosphohydrolase (231 aa).

The region spanning 6-149 (GFRPNVGIIL…KRDVYQLALT (144 aa)) is the Nudix hydrolase domain. The Nudix box motif lies at 38–59 (GGIKYGETPEQAMYRELHEEIG). The tract at residues 168–200 (VHHGRHGSGQRYAQQPGQPPTLAQRRPLQPVTQ) is disordered.

Belongs to the Nudix hydrolase family. RppH subfamily. A divalent metal cation serves as cofactor.

Accelerates the degradation of transcripts by removing pyrophosphate from the 5'-end of triphosphorylated RNA, leading to a more labile monophosphorylated state that can stimulate subsequent ribonuclease cleavage. This Cupriavidus pinatubonensis (strain JMP 134 / LMG 1197) (Cupriavidus necator (strain JMP 134)) protein is RNA pyrophosphohydrolase.